A 745-amino-acid polypeptide reads, in one-letter code: TonB-dependent heme receptor A (745 aa).

The first 24 residues, 1-24 (MNILINKRIFLLVTLVGIQLNVTA), serve as a signal peptide directing secretion. In terms of domain architecture, TBDR plug spans 45–157 (DDSNKLPGRS…FAGTVKFETK (113 aa)). In terms of domain architecture, TBDR beta-barrel spans 168–745 (KIGGFLKYGN…NIKFSLSQKF (578 aa)).

Belongs to the TonB-dependent receptor family.

It is found in the cell outer membrane. Functionally, heme receptor. The protein is TonB-dependent heme receptor A (tdhA) of Haemophilus influenzae (strain 86-028NP).